A 348-amino-acid chain; its full sequence is Protein RecA (348 aa).

67–74 contacts ATP; that stretch reads GPESSGKT.

Belongs to the RecA family.

Its subcellular location is the cytoplasm. In terms of biological role, can catalyze the hydrolysis of ATP in the presence of single-stranded DNA, the ATP-dependent uptake of single-stranded DNA by duplex DNA, and the ATP-dependent hybridization of homologous single-stranded DNAs. It interacts with LexA causing its activation and leading to its autocatalytic cleavage. The polypeptide is Protein RecA (Salinispora arenicola (strain CNS-205)).